A 142-amino-acid chain; its full sequence is MATERTLAILKPDCVRKEKVGEVLRRIQDAGFQLCAMKMITMSKAEAEGFYAVHEDKPFFDDLTDFMSSGPCVPVVLEKENAIADFRELIGATDPDEAAEGTIRSDFAGSIQENIVHGSDSPSNGQKEAGYFFPEHEIVANT.

ATP contacts are provided by Lys11, Phe59, Arg87, Thr93, Arg104, and Asn114. His117 (pros-phosphohistidine intermediate) is an active-site residue.

It belongs to the NDK family. In terms of assembly, homotetramer. Mg(2+) serves as cofactor.

The protein localises to the cytoplasm. The enzyme catalyses a 2'-deoxyribonucleoside 5'-diphosphate + ATP = a 2'-deoxyribonucleoside 5'-triphosphate + ADP. It carries out the reaction a ribonucleoside 5'-diphosphate + ATP = a ribonucleoside 5'-triphosphate + ADP. Functionally, major role in the synthesis of nucleoside triphosphates other than ATP. The ATP gamma phosphate is transferred to the NDP beta phosphate via a ping-pong mechanism, using a phosphorylated active-site intermediate. The sequence is that of Nucleoside diphosphate kinase from Salinibacter ruber (strain DSM 13855 / M31).